The sequence spans 218 residues: Adenylate kinase (218 aa).

ATP is bound at residue 10–15 (GAGKGT). The tract at residues 30-59 (STGDMLRAAIAKGTPLGLSAQKIMESGGLV) is NMP. Residues threonine 31, arginine 36, 57–59 (GLV), 85–88 (GFPR), and glutamine 92 contribute to the AMP site. Residues 122 to 159 (GRRIHQPSGRVYHVVNQPPKNPGVDDITGEPLIQRDDD) are LID. ATP-binding positions include arginine 123 and 132–133 (VY). The AMP site is built by arginine 156 and arginine 167. Position 203 (glycine 203) interacts with ATP.

The protein belongs to the adenylate kinase family. As to quaternary structure, monomer.

It localises to the cytoplasm. It carries out the reaction AMP + ATP = 2 ADP. It participates in purine metabolism; AMP biosynthesis via salvage pathway; AMP from ADP: step 1/1. Functionally, catalyzes the reversible transfer of the terminal phosphate group between ATP and AMP. Plays an important role in cellular energy homeostasis and in adenine nucleotide metabolism. In Legionella pneumophila (strain Corby), this protein is Adenylate kinase.